A 391-amino-acid polypeptide reads, in one-letter code: Capsule polysaccharide export outer membrane protein CtrA (391 aa).

A signal peptide spans 1–22; the sequence is MFKVKFYIRHAVLLLCGSLIVG. A lipid anchor (N-palmitoyl cysteine) is attached at cysteine 23. A lipid anchor (S-diacylglycerol cysteine) is attached at cysteine 23. At 23–33 the chain is on the periplasmic side; sequence CSAIPSSGPSA. A beta stranded transmembrane segment spans residues 34–43; sequence KKIVSLGQQS. Over 44-57 the chain is Extracellular; it reads EVQIPEVELIDVNH. Residues 58–67 form a beta stranded membrane-spanning segment; the sequence is TVAQLLYKAQ. The Periplasmic segment spans residues 68-83; the sequence is INQSFTQFGDGYASAG. Residues 84–93 form a beta stranded membrane-spanning segment; it reads TLNIGDVLDI. The Extracellular segment spans residues 94–117; it reads MIWEAPPAVLFGGGLSSMGSGSAH. Residues 118–127 form a beta stranded membrane-spanning segment; sequence QTKLPEQLVT. Residues 128–135 are Periplasmic-facing; sequence ARGTVSVP. The beta stranded transmembrane segment at 136–145 threads the bilayer; it reads FVGDISVVGK. Over 146-148 the chain is Extracellular; that stretch reads TPG. A beta stranded membrane pass occupies residues 149 to 158; the sequence is QVQEIIKGRL. Topologically, residues 159–161 are periplasmic; it reads KKM. A beta stranded membrane pass occupies residues 162-171; the sequence is ANQPQVMVRL. Topologically, residues 172–178 are extracellular; that stretch reads VQNNAAN. Residues 179-188 form a beta stranded membrane-spanning segment; the sequence is VSVIRAGNSV. The Periplasmic segment spans residues 189–391; that stretch reads RMPLTAAGER…GANSINNLTN (203 aa).

The protein belongs to the BexD/CtrA/VexA family.

The protein resides in the cell outer membrane. Functionally, involved in transport of capsular polysaccharides to the cell surface. May function as a membrane anchor for capsular polysaccharides. Possible porin properties. The protein is Capsule polysaccharide export outer membrane protein CtrA (ctrA) of Neisseria meningitidis serogroup B (strain ATCC BAA-335 / MC58).